The chain runs to 263 residues: Hydroxyacylglutathione hydrolase (263 aa).

Residues H56, H58, D60, H61, H115, D135, and H175 each coordinate Zn(2+).

Belongs to the metallo-beta-lactamase superfamily. Glyoxalase II family. Monomer. Zn(2+) is required as a cofactor.

The enzyme catalyses an S-(2-hydroxyacyl)glutathione + H2O = a 2-hydroxy carboxylate + glutathione + H(+). Its pathway is secondary metabolite metabolism; methylglyoxal degradation; (R)-lactate from methylglyoxal: step 2/2. Functionally, thiolesterase that catalyzes the hydrolysis of S-D-lactoyl-glutathione to form glutathione and D-lactic acid. This Polaromonas sp. (strain JS666 / ATCC BAA-500) protein is Hydroxyacylglutathione hydrolase.